Here is a 361-residue protein sequence, read N- to C-terminus: Replication-associated protein (361 aa).

A disordered region spans residues 1–31; it reads MSSLPVSESEGEGSGTSVQVPSRGGQVTPGE. Residues 35–138 form the CRESS-DNA virus Rep endonuclease domain; that stretch reads SLRTKHVFLT…PESSWEFGKF (104 aa). Residues 42–45 carry the RCR-1 motif; the sequence is FLTY. 3 residues coordinate a divalent metal cation: Glu-76, His-84, and His-86. An RCR-2 motif is present at residues 84 to 86; the sequence is HLH. Catalysis depends on Tyr-124, which acts as the For DNA cleavage activity. Positions 124-127 match the RCR-3 motif; sequence YCMK. An oligomerization region spans residues 192-204; sequence SANALFPDPPQTY. 243–250 is a binding site for ATP; that stretch reads GPTRTGKT. The segment at 266–285 is transactivation; sequence VNFLEEWNCQAQFNIIDDIP. The Nuclear localization signal motif lies at 307–317; the sequence is KYGKKKRIPNG.

Belongs to the geminiviridae Rep protein family. Homooligomer. Rep binds to repeated DNA motifs (iterons). Forms the O-complex, which is a Rep-DNA complex involved in the initiation of RCR. Part of the C- and V-complexes which are RepA-Rep-DNA complexes involved in the c-sense and v-sense transcription. Requires Mg(2+) as cofactor. Mn(2+) serves as cofactor.

It is found in the host nucleus. Its function is as follows. Essential for the replication of viral ssDNA. The closed circular ssDNA genome is first converted to a superhelical dsDNA. Rep binds a specific region at the genome origin of replication. It introduces an endonucleolytic nick within the conserved sequence 5'-TAATATTAC-3' in the intergenic region of the genome present in all geminiviruses, thereby initiating the rolling circle replication (RCR). Following cleavage, binds covalently to the 5'-phosphate of DNA as a tyrosyl ester. The cleavage gives rise to a free 3'-OH that serves as a primer for the cellular DNA polymerase. The polymerase synthesizes the (+) strand DNA by rolling circle mechanism. After one round of replication, a Rep-catalyzed nucleotidyl transfer reaction releases a circular single-stranded virus genome, thereby terminating the replication. Displays origin-specific DNA cleavage, nucleotidyl transferase, ATPase and helicase activities. Acts as an inhibitor of C-sense gene transcription. In Avena sativa (Oat), this protein is Replication-associated protein.